We begin with the raw amino-acid sequence, 310 residues long: Homoserine kinase (310 aa).

91 to 101 is a binding site for ATP; the sequence is PIGSGLGSSAC.

The protein belongs to the GHMP kinase family. Homoserine kinase subfamily.

The protein localises to the cytoplasm. The enzyme catalyses L-homoserine + ATP = O-phospho-L-homoserine + ADP + H(+). It functions in the pathway amino-acid biosynthesis; L-threonine biosynthesis; L-threonine from L-aspartate: step 4/5. Its function is as follows. Catalyzes the ATP-dependent phosphorylation of L-homoserine to L-homoserine phosphate. The protein is Homoserine kinase of Escherichia coli O81 (strain ED1a).